A 252-amino-acid polypeptide reads, in one-letter code: AAVVVLMVLSSPGTEGGNSERHFVSQFKGECYFTNGTQRIRSVDRYIYNREEYLRFDSDVGEYRAVTELGRSDAEYYNKQYLERTRAELDTVCRHNYEGVETPTSLRRLEQPNVVISLSRTEALNHHNTLVCSVTDFYPAKIKVRWFRNGQEETVGVSSTQLIRNGDWTFQVLVMLEMAPRRGEVYTCHVEHPSLKSPITVEWRAQSESARSKMLSGIGGCVLGVIFLGLGLFIRYRSQKGPRGPPPAGLLQ.

Residues 1-16 (AAVVVLMVLSSPGTEG) form the signal peptide. A beta-1 region spans residues 17-109 (GNSERHFVSQ…VETPTSLRRL (93 aa)). Over 17–213 (GNSERHFVSQ…RAQSESARSK (197 aa)) the chain is Extracellular. Disulfide bonds link Cys-31–Cys-93 and Cys-132–Cys-188. An N-linked (GlcNAc...) asparagine glycan is attached at Asn-35. The beta-2 stretch occupies residues 110–203 (EQPNVVISLS…SLKSPITVEW (94 aa)). One can recognise an Ig-like C1-type domain in the interval 112–200 (PNVVISLSRT…EHPSLKSPIT (89 aa)). The interval 204–213 (RAQSESARSK) is connecting peptide. Residues 214–234 (MLSGIGGCVLGVIFLGLGLFI) form a helical membrane-spanning segment. Residues 235–252 (RYRSQKGPRGPPPAGLLQ) lie on the Cytoplasmic side of the membrane.

It belongs to the MHC class II family. Post-translationally, ubiquitinated in immature dendritic cells leading to down-regulation of MHC class II.

It localises to the membrane. This is H-2 class II histocompatibility antigen, A-F beta chain (H2-Ab1) from Mus musculus (Mouse).